A 426-amino-acid polypeptide reads, in one-letter code: Inhibin beta A chain (426 aa).

Residues Met-1–Ser-20 form the signal peptide. Positions Ser-21–Arg-310 are excised as a propeptide. Asn-165 carries an N-linked (GlcNAc...) asparagine glycan. A compositionally biased stretch (polar residues) spans Gln-177 to Ser-186. Disordered stretches follow at residues Gln-177–Arg-201 and Lys-260–Pro-291. Residues Lys-263–Gly-275 show a composition bias toward basic and acidic residues. 4 disulfide bridges follow: Cys-314-Cys-322, Cys-321-Cys-391, Cys-350-Cys-423, and Cys-354-Cys-425.

The protein belongs to the TGF-beta family. In terms of assembly, dimeric, linked by one or more disulfide bonds. Inhibin A is a dimer of alpha/INHA and beta-A/INHBA. Activin A is a homodimer of beta-A/INHBA. Activin AB is a dimer of beta-A/INHBA and beta-B/INHBB. Interacts with FST and FSTL3; these interactions prevent activin A interaction to its type II receptor. Activin A interacts with ACVR2A. Activin A interacts with BMPR2. Inhibin A interacts with ACVR1; this interaction creates a non-signaling complex (NSC) that inhibits ACVR1-mediated BMP signaling. Inhibin A interacts with ACVR2A.

The protein localises to the secreted. In terms of biological role, inhibins/activins are involved in regulating a number of diverse functions such as hypothalamic and pituitary hormone secretion, gonadal hormone secretion, germ cell development and maturation, erythroid differentiation, insulin secretion, nerve cell survival, embryonic axial development or bone growth, depending on their subunit composition. Functionally, activin A is a homodimer of INHBA that plays a role in several essential biological processes including embryonic development, stem cell maintenance and differentiation, haematopoiesis, cell proliferation and tissue fibrosis. Signals through type I (such as ACVR1B or ACVR1C) and type II receptors (such as ACVR2A, ACVR2B or BMPR2) which, upon ligand binding, phosphorylate SMAD2 and SMAD3 intracellular signaling mediators that form a complex with SMAD4, translocate to the nucleus and modulate gene expression. Can also activate alternative non-canonical intracellular signaling pathways including the p38 MAPK, extracellular signal-regulated kinases 1/2 (ERK1/2) and c-Jun N-terminal kinases (JNKs) to modulate cell migration and differentiation. Alternatively, promotes osteoblastic differentiation via ACVRL1-SMAD1/5/9 pathway. In addition, can engage the type I receptor ACVR1 to form an ACVR1-activin A-type II receptor non-signaling complex (NSC) that renders receptors unavailable for engagement with BMPs, hence resulting in an apparent inhibition of ACVR1-mediated BMP signaling. Inhibin A is a dimer of alpha/INHA and beta-A/INHBA that functions as a feedback regulator in the hypothalamic-pituitary-gonadal (HPG) axis. Inhibits the secretion of FSH from the anterior pituitary gland by acting on pituitary gonadotrope cells. Antagonizes activin A by binding to the proteoglycan, betaglycan, and forming a stable complex with and, thereby, sequestering type II activin receptors while excluding type I receptor. The sequence is that of Inhibin beta A chain (INHBA) from Equus caballus (Horse).